We begin with the raw amino-acid sequence, 273 residues long: Phosphatidylglycerol--prolipoprotein diacylglyceryl transferase (273 aa).

7 helical membrane passes run 21 to 41 (VSIR…LWLA), 60 to 80 (LLFA…VIFY), 95 to 115 (VWTG…AMFW), 124 to 144 (FFGV…MGRM), 176 to 196 (SQLY…NWFI), 203 to 223 (GSVS…VEFV), and 237 to 257 (ISMG…MMVW). An a 1,2-diacyl-sn-glycero-3-phospho-(1'-sn-glycerol)-binding site is contributed by R143.

Belongs to the Lgt family.

It localises to the cell inner membrane. The enzyme catalyses L-cysteinyl-[prolipoprotein] + a 1,2-diacyl-sn-glycero-3-phospho-(1'-sn-glycerol) = an S-1,2-diacyl-sn-glyceryl-L-cysteinyl-[prolipoprotein] + sn-glycerol 1-phosphate + H(+). Its pathway is protein modification; lipoprotein biosynthesis (diacylglyceryl transfer). Functionally, catalyzes the transfer of the diacylglyceryl group from phosphatidylglycerol to the sulfhydryl group of the N-terminal cysteine of a prolipoprotein, the first step in the formation of mature lipoproteins. This is Phosphatidylglycerol--prolipoprotein diacylglyceryl transferase from Vibrio parahaemolyticus serotype O3:K6 (strain RIMD 2210633).